A 348-amino-acid chain; its full sequence is Protein RecA (348 aa).

67–74 (GPESSGKT) serves as a coordination point for ATP.

Belongs to the RecA family.

The protein resides in the cytoplasm. In terms of biological role, can catalyze the hydrolysis of ATP in the presence of single-stranded DNA, the ATP-dependent uptake of single-stranded DNA by duplex DNA, and the ATP-dependent hybridization of homologous single-stranded DNAs. It interacts with LexA causing its activation and leading to its autocatalytic cleavage. In Cutibacterium acnes (Propionibacterium acnes), this protein is Protein RecA.